Consider the following 424-residue polypeptide: Zona pellucida sperm-binding protein 3 (424 aa).

The signal sequence occupies residues 1 to 22 (MELSYRLFICLLLWGSTELCYP). Glutamine 23 bears the Pyrrolidone carboxylic acid mark. The Extracellular portion of the chain corresponds to 23–387 (QPLWLLQGGA…QWALPSDTSV (365 aa)). The ZP domain maps to 45 to 307 (ECQEATLMVM…KACSFSKPSN (263 aa)). 2 disulfides stabilise this stretch: cysteine 46–cysteine 140 and cysteine 78–cysteine 99. 2 N-linked (GlcNAc...) asparagine glycosylation sites follow: asparagine 125 and asparagine 147. Threonine 156, threonine 162, and threonine 163 each carry an O-linked (GalNAc...) threonine glycan. 2 disulfides stabilise this stretch: cysteine 217–cysteine 282 and cysteine 239–cysteine 300. Asparagine 272 carries an N-linked (GlcNAc...) asparagine glycan. The disordered stretch occupies residues 330–356 (PSHSRRQPHVMSQWSRSASRNRRHVTE). The propeptide at 351–424 (RRHVTEEADV…TASHPVSASE (74 aa)) is removed in mature form. The chain crosses the membrane as a helical span at residues 388–408 (VLLGVGLAVVVSLTLTAVILV). The Cytoplasmic portion of the chain corresponds to 409-424 (LTRRCRTASHPVSASE).

It belongs to the ZP domain family. ZPC subfamily. Polymers of ZP2 and ZP3 organized into long filaments cross-linked by ZP1 homodimers. Interacts with ZP1 and ZP2. Post-translationally, proteolytically cleaved before the transmembrane segment to yield the secreted ectodomain incorporated in the zona pellucida. N-glycosylated. In terms of processing, O-glycosylated; removal of O-linked glycans may play an important role in the post-fertilization block to polyspermy. As to expression, expressed in oocytes (at protein level).

Its subcellular location is the zona pellucida. It is found in the cell membrane. Functionally, component of the zona pellucida, an extracellular matrix surrounding oocytes which mediates sperm binding, induction of the acrosome reaction and prevents post-fertilization polyspermy. The zona pellucida is composed of 3 to 4 glycoproteins, ZP1, ZP2, ZP3, and ZP4. ZP3 is essential for sperm binding and zona matrix formation. This chain is Zona pellucida sperm-binding protein 3 (ZP3), found in Homo sapiens (Human).